Consider the following 389-residue polypeptide: Chalcone synthase (389 aa).

Cys164 is an active-site residue.

Belongs to the thiolase-like superfamily. Chalcone/stilbene synthases family.

It carries out the reaction (E)-4-coumaroyl-CoA + 3 malonyl-CoA + 3 H(+) = 2',4,4',6'-tetrahydroxychalcone + 3 CO2 + 4 CoA. It participates in secondary metabolite biosynthesis; flavonoid biosynthesis. The primary product of this enzyme is 4,2',4',6'-tetrahydroxychalcone (also termed naringenin-chalcone or chalcone) which can under specific conditions spontaneously isomerize into naringenin. The chain is Chalcone synthase (CHS) from Hydrangea macrophylla (Bigleaf hydrangea).